The primary structure comprises 74 residues: ATP synthase subunit c (74 aa).

2 consecutive transmembrane segments (helical) span residues 13-33 (ISVIALAGVGLGIGNIFASLI) and 51-71 (ILGFALTEAVALFALLIAFLI).

The protein belongs to the ATPase C chain family. F-type ATPases have 2 components, F(1) - the catalytic core - and F(0) - the membrane proton channel. F(1) has five subunits: alpha(3), beta(3), gamma(1), delta(1), epsilon(1). F(0) has three main subunits: a(1), b(2) and c(10-14). The alpha and beta chains form an alternating ring which encloses part of the gamma chain. F(1) is attached to F(0) by a central stalk formed by the gamma and epsilon chains, while a peripheral stalk is formed by the delta and b chains.

It is found in the cell inner membrane. Its function is as follows. F(1)F(0) ATP synthase produces ATP from ADP in the presence of a proton or sodium gradient. F-type ATPases consist of two structural domains, F(1) containing the extramembraneous catalytic core and F(0) containing the membrane proton channel, linked together by a central stalk and a peripheral stalk. During catalysis, ATP synthesis in the catalytic domain of F(1) is coupled via a rotary mechanism of the central stalk subunits to proton translocation. Key component of the F(0) channel; it plays a direct role in translocation across the membrane. A homomeric c-ring of between 10-14 subunits forms the central stalk rotor element with the F(1) delta and epsilon subunits. In Granulibacter bethesdensis (strain ATCC BAA-1260 / CGDNIH1), this protein is ATP synthase subunit c.